Here is a 396-residue protein sequence, read N- to C-terminus: Elongation factor Tu (396 aa).

One can recognise a tr-type G domain in the interval 10–206 (KPHINVGTIG…ALDSYIPEPQ (197 aa)). Residues 19-26 (GHVDHGKT) form a G1 region. Position 19 to 26 (19 to 26 (GHVDHGKT)) interacts with GTP. Threonine 26 serves as a coordination point for Mg(2+). Residues 60–64 (GITIN) are G2. The tract at residues 81–84 (DCPG) is G3. GTP-binding positions include 81–85 (DCPGH) and 136–139 (NKAD). The tract at residues 136-139 (NKAD) is G4. The segment at 174 to 176 (SAL) is G5.

It belongs to the TRAFAC class translation factor GTPase superfamily. Classic translation factor GTPase family. EF-Tu/EF-1A subfamily. In terms of assembly, monomer.

The protein localises to the cytoplasm. It carries out the reaction GTP + H2O = GDP + phosphate + H(+). In terms of biological role, GTP hydrolase that promotes the GTP-dependent binding of aminoacyl-tRNA to the A-site of ribosomes during protein biosynthesis. This chain is Elongation factor Tu, found in Nitrosospira multiformis (strain ATCC 25196 / NCIMB 11849 / C 71).